The sequence spans 109 residues: U4-lycotoxin-Ls1a (109 aa).

Positions 1–22 (MKVLVLFSVLFLTLFSYSSTEA) are cleaved as a signal peptide. Residues 23–44 (IDEFDSDAEDDMLSLMANEQVR) constitute a propeptide that is removed on maturation. The tract at residues 45–88 (AKACTPRLHDCSHDRHSCCRGELFKDVCYCFYPEGEDKTEVCSC) is knottin domain. 4 disulfide bridges follow: C48/C63, C55/C72, C62/C88, and C74/C86. The segment at 89-108 (QQPKSHKYIEKVVDKAKTVV) is linear cationic cytotoxin domain.

It belongs to the neurotoxin 19 (CSTX) family. 05 (U4-Lctx) subfamily. Expressed by the venom gland.

The protein localises to the secreted. Functionally, enhances the high-affinity desensitization of human P2RX3 purinoceptors. The protein is U4-lycotoxin-Ls1a of Lycosa singoriensis (Wolf spider).